The sequence spans 300 residues: N-acetylmuramic acid 6-phosphate etherase 2 (300 aa).

The region spanning 57-220 (ITAAFANGGR…TTGAMIRSGK (164 aa)) is the SIS domain. The active-site Proton donor is Glu85. Glu116 is an active-site residue.

The protein belongs to the GCKR-like family. MurNAc-6-P etherase subfamily. As to quaternary structure, homodimer.

It catalyses the reaction N-acetyl-D-muramate 6-phosphate + H2O = N-acetyl-D-glucosamine 6-phosphate + (R)-lactate. It participates in amino-sugar metabolism; 1,6-anhydro-N-acetylmuramate degradation. It functions in the pathway amino-sugar metabolism; N-acetylmuramate degradation. Its pathway is cell wall biogenesis; peptidoglycan recycling. Functionally, specifically catalyzes the cleavage of the D-lactyl ether substituent of MurNAc 6-phosphate, producing GlcNAc 6-phosphate and D-lactate. Together with AnmK, is also required for the utilization of anhydro-N-acetylmuramic acid (anhMurNAc) either imported from the medium or derived from its own cell wall murein, and thus plays a role in cell wall recycling. This chain is N-acetylmuramic acid 6-phosphate etherase 2, found in Vibrio parahaemolyticus serotype O3:K6 (strain RIMD 2210633).